Here is a 129-residue protein sequence, read N- to C-terminus: Large ribosomal subunit protein bL17 (129 aa).

This sequence belongs to the bacterial ribosomal protein bL17 family. As to quaternary structure, part of the 50S ribosomal subunit. Contacts protein L32.

The sequence is that of Large ribosomal subunit protein bL17 from Pasteurella multocida (strain Pm70).